Reading from the N-terminus, the 229-residue chain is Adenylate kinase (229 aa).

Positions 1–9 are excised as a propeptide; it reads MLSTLAKRF. Position 25–30 (25–30) interacts with ATP; the sequence is GVGKGT. Residues 45–74 form an NMP region; sequence STGDALRAEIRGQTPLGKRVKGIIESGGLV. Residues T46, R51, 72–74, 100–103, and Q107 contribute to the AMP site; these read GLV and GIPR. An LID region spans residues 141–178; that stretch reads GRLFHPGSGRVYHKVTNPPKKPMTDDITGEPLIIRKDD. ATP is bound at residue R142. AMP-binding residues include R175 and R186. G214 lines the ATP pocket.

It belongs to the adenylate kinase family.

It localises to the hydrogenosome. The enzyme catalyses AMP + ATP = 2 ADP. Functionally, catalyzes the reversible transfer of the terminal phosphate group between ATP and AMP. Plays an important role in cellular energy homeostasis and in adenine nucleotide metabolism. This chain is Adenylate kinase, found in Trichomonas vaginalis.